Consider the following 240-residue polypeptide: Endo-chitosanase B (240 aa).

The first 17 residues, 1–17, serve as a signal peptide directing secretion; it reads MRLSEILAVALVTGATA. Asn-86 carries N-linked (GlcNAc...) asparagine glycosylation.

It belongs to the glycosyl hydrolase 75 family.

It localises to the secreted. It catalyses the reaction Endohydrolysis of beta-(1-&gt;4)-linkages between D-glucosamine residues in a partly acetylated chitosan.. Functionally, chitosanase catalyzing the endo-type cleavage of chitosan, the deacylated form of chitin. Chitosanase may be crucial in the degradation of the deacetylated portion of chitin in the fungal cell wall. Chitoolisaccharides produced by the hydrolysis of partially N-acetylated chitosan are known to have many biological activities, including antibacterial activity, immune-enhancing effects, and elicitor activity. This is Endo-chitosanase B (csnB) from Aspergillus oryzae (Yellow koji mold).